The sequence spans 581 residues: Urease subunit alpha (581 aa).

The Urease domain occupies 134–581 (GGFDSHIHFI…LPMTQRYFLF (448 aa)). Residues His139, His141, and Lys222 each contribute to the Ni(2+) site. Lys222 carries the post-translational modification N6-carboxylysine. His224 is a substrate binding site. His251 and His277 together coordinate Ni(2+). The active-site Proton donor is His325. Asp365 is a Ni(2+) binding site.

The protein belongs to the metallo-dependent hydrolases superfamily. Urease alpha subunit family. Heterotrimer of UreA (gamma), UreB (beta) and UreC (alpha) subunits. Three heterotrimers associate to form the active enzyme. Requires Ni cation as cofactor. Carboxylation allows a single lysine to coordinate two nickel ions.

The protein localises to the cytoplasm. It carries out the reaction urea + 2 H2O + H(+) = hydrogencarbonate + 2 NH4(+). It participates in nitrogen metabolism; urea degradation; CO(2) and NH(3) from urea (urease route): step 1/1. This chain is Urease subunit alpha, found in Albidiferax ferrireducens (strain ATCC BAA-621 / DSM 15236 / T118) (Rhodoferax ferrireducens).